Consider the following 256-residue polypeptide: Imidazole glycerol phosphate synthase subunit HisF (256 aa).

Catalysis depends on residues Asp-11 and Asp-130.

The protein belongs to the HisA/HisF family. As to quaternary structure, heterodimer of HisH and HisF.

The protein resides in the cytoplasm. The catalysed reaction is 5-[(5-phospho-1-deoxy-D-ribulos-1-ylimino)methylamino]-1-(5-phospho-beta-D-ribosyl)imidazole-4-carboxamide + L-glutamine = D-erythro-1-(imidazol-4-yl)glycerol 3-phosphate + 5-amino-1-(5-phospho-beta-D-ribosyl)imidazole-4-carboxamide + L-glutamate + H(+). It functions in the pathway amino-acid biosynthesis; L-histidine biosynthesis; L-histidine from 5-phospho-alpha-D-ribose 1-diphosphate: step 5/9. IGPS catalyzes the conversion of PRFAR and glutamine to IGP, AICAR and glutamate. The HisF subunit catalyzes the cyclization activity that produces IGP and AICAR from PRFAR using the ammonia provided by the HisH subunit. The protein is Imidazole glycerol phosphate synthase subunit HisF of Prochlorococcus marinus (strain NATL2A).